Here is a 1674-residue protein sequence, read N- to C-terminus: MTEAITEAAVASSEEVSEERDDLGPLELHDSGTFQQVVNLLDIIDSESAKTDTTGAGLDMRKTLASVIIMEKATTEPSVVINTLIRCLQVPEISTQRKVNIYNILQDIIQQEGELEEQCVQRLVAIASKEMREIPEMEGYMKAEVASDTLVALSRNHFSLVMYELQHHLKPLNLTDEFVIITLAKLANGNVFEFMPYMGITLATIFTMLRLANEAKIRQAICSAMETFCETVQFYLKHLEESVYPVMTEEEFALKVFPMYRYFVTVWLRHYNPEVKLGVIKSLKPMLGLLLPNDDLREQVYDYIPLLLAEYQGSLEVLFVTQVLRQILELSVTTNTPVPQMQLHTIFTELHVQVCNKAPAQHQYSSQNLMEMVHCFVALARSYPKELMKFFFSQMETNKEAVRVGTLNLIRAIVSADEPRMSIRAIYLAIRVVKNTISDTRSKVRMAILHIIGQLALCGYQERIKGWGLKYLSVQLTLSTYKLTNRREKFYQRDLEERMVHKVTMDTVKIITSSVSGMTTEFWVRLLCYIMETDYVEALTPICISLTNLAEHQLHGQDVDVSVAGKSRQVDLPAPQKLLARLLVLMSSPYKGEGRGIAMLNLLRTLSQSIAPSMADMWELEIALLVRYLEEHTEFTWDQKAWEDKLIQFLRNSLKKTRGSSWSLRLSKELNNQIASFDSPSLEKGFLYRALGFTLATGLEASKVEVLLLELLYKTDYSNDFDSEGVIMCFGLCARGQVKTVLNVLHDFEERIQESEQSWQISAWRKDHPWRRETVKSALMVMYSCVASYCHPQLLLNLVDSPITAKIIHHYVSSCQDICLKMAFMKSVVQVTKAINNIKDLEDFHFAQKTTLTSIIVAVIKAEPTDNLVSPVRALAMEALSHLSKLKPFYSTEENSELMDISIHSVISLQLPGEDNESIKTLYANALSSLEQLMESLLQRQLDPKGLQEMVQLLEKWILSEKEWEREKAVSLHLYLMWIYVHSTAVCIHLKLGQFGTMVGLIAPCTCDAHQRTRMASMNVLSSLLDLHASQTCSLWGPSKQKELEKCKGDLQSTDVEKIFCASSRIAKVVCMEFSCDEVVSLIQKLCENTGAMNLQHDKASVTWIAFFLQMRAKELEDKVAEILSAILVHLPVVDHPEVRRLLIDGILLLAHHHQETILTSLLRQPLPMESHLAEVWLAVSENVPFARTMLHSLMGRLQSRLSPRISATSKADIWRLAAVDPLMTLCTIHLLIQKLDENDKLPDFLPDLIYTLLLQLGSSHRPEAAPPVLKMWKLVHTTPLPEEMNLQRVTIKSMQLLFKRVKSQHLAHTLDEQAVWDLLQDGGTFLEGVSLLARLCMQHVEGHRQRLAELVLRGMDSEVLSCRISSTAVCFMSGPVLYQEKLLKPAALLLEKGADQEEDEALRVLSLRALGNMALGAPKKVKQYRKVLLEKCLGPLREPVSNSVTAEGMEALTKILAELREGDVGSSFDAMSEQCRIFFDNESELLRLKAFILFGKLARVVGMSKKHFFKGEVKKAWIPLMLHSQDPCSNAAQACMATMFQCVHFWGWKSLEHPSGPSDTATDDKMTVFQTTMCSILTRKKPAVLYRFLLETMAYVKNNLSRIRIAACNLAGIIMKQMSTHYLKKLDFPALRNSLQELQLDPDPGVRRAALETLTVLDSCSQHGFLASPQGMS.

Residues 1-26 are disordered; it reads MTEAITEAAVASSEEVSEERDDLGPL. HEAT repeat units lie at residues 73-96, 97-133, 195-234, 254-292, 382-419, 424-461, 573-612, 615-641, 642-679, 739-776, 993-1030, 1221-1263, 1381-1420, and 1627-1674; these read ATTEPSVVINTLIRCLQVPEISTQ, RKVNIYNILQDIIQQEGELEEQCVQRLVAIASKEMRE, MPYMGITLATIFTMLRLANEAKIRQAICSAMETFCETVQF, LKVFPMYRYFVTVWLRHYNPEVKLGVIKSLKPMLGLLLP, SYPKELMKFFFSQMETNKEAVRVGTLNLIRAIVSADEP, RAIYLAIRVVKNTISDTRSKVRMAILHIIGQLALCGYQ, PAPQKLLARLLVLMSSPYKGEGRGIAMLNLLRTLSQSIAP, ADMWELEIALLVRYLEEHTEFTWDQKA, WEDKLIQFLRNSLKKTRGSSWSLRLSKELNNQIASFDS, KTVLNVLHDFEERIQESEQSWQISAWRKDHPWRRETVK, GQFGTMVGLIAPCTCDAHQRTRMASMNVLSSLLDLHAS, DPLM…SHRP, EKLLKPAALLLEKGADQEEDEALRVLSLRALGNMALGAPK, and LDFP…QGMS.

The polypeptide is Maestro heat-like repeat-containing protein family member 2A (MROH2A) (Homo sapiens (Human)).